A 180-amino-acid chain; its full sequence is Segregation and condensation protein B (180 aa).

It belongs to the ScpB family. Homodimer. Homodimerization may be required to stabilize the binding of ScpA to the Smc head domains. Component of a cohesin-like complex composed of ScpA, ScpB and the Smc homodimer, in which ScpA and ScpB bind to the head domain of Smc. The presence of the three proteins is required for the association of the complex with DNA.

The protein resides in the cytoplasm. Participates in chromosomal partition during cell division. May act via the formation of a condensin-like complex containing Smc and ScpA that pull DNA away from mid-cell into both cell halves. This chain is Segregation and condensation protein B, found in Staphylococcus epidermidis (strain ATCC 35984 / DSM 28319 / BCRC 17069 / CCUG 31568 / BM 3577 / RP62A).